A 268-amino-acid polypeptide reads, in one-letter code: Ribosomal RNA small subunit methyltransferase A (268 aa).

6 residues coordinate S-adenosyl-L-methionine: Asn18, Leu20, Gly45, Glu66, Asp91, and Asn112.

Belongs to the class I-like SAM-binding methyltransferase superfamily. rRNA adenine N(6)-methyltransferase family. RsmA subfamily.

It localises to the cytoplasm. The catalysed reaction is adenosine(1518)/adenosine(1519) in 16S rRNA + 4 S-adenosyl-L-methionine = N(6)-dimethyladenosine(1518)/N(6)-dimethyladenosine(1519) in 16S rRNA + 4 S-adenosyl-L-homocysteine + 4 H(+). Specifically dimethylates two adjacent adenosines (A1518 and A1519) in the loop of a conserved hairpin near the 3'-end of 16S rRNA in the 30S particle. May play a critical role in biogenesis of 30S subunits. The polypeptide is Ribosomal RNA small subunit methyltransferase A (Shewanella putrefaciens (strain CN-32 / ATCC BAA-453)).